A 473-amino-acid polypeptide reads, in one-letter code: Fumarate hydratase class II (473 aa).

Substrate contacts are provided by residues serine 104–threonine 106, histidine 128–aspartate 131, serine 138–asparagine 140, and threonine 186. Histidine 187 serves as the catalytic Proton donor/acceptor. Serine 318 is an active-site residue. Residues serine 319 and lysine 324–asparagine 326 each bind substrate.

This sequence belongs to the class-II fumarase/aspartase family. Fumarase subfamily. Homotetramer.

It is found in the cytoplasm. It carries out the reaction (S)-malate = fumarate + H2O. Its pathway is carbohydrate metabolism; tricarboxylic acid cycle; (S)-malate from fumarate: step 1/1. Functionally, involved in the TCA cycle. Catalyzes the stereospecific interconversion of fumarate to L-malate. This Corynebacterium efficiens (strain DSM 44549 / YS-314 / AJ 12310 / JCM 11189 / NBRC 100395) protein is Fumarate hydratase class II.